A 246-amino-acid chain; its full sequence is Protein phosphatase PhpP (246 aa).

The PPM-type phosphatase domain occupies 2–240; the sequence is EISLLTDVGQ…DNITVALVSM (239 aa). Asp-36, Gly-37, Asp-192, and Asp-231 together coordinate Mn(2+).

Belongs to the PP2C family. Interacts with the kinase domain of StkP. Mn(2+) serves as cofactor.

It localises to the cytoplasm. The enzyme catalyses O-phospho-L-seryl-[protein] + H2O = L-seryl-[protein] + phosphate. It catalyses the reaction O-phospho-L-threonyl-[protein] + H2O = L-threonyl-[protein] + phosphate. With respect to regulation, phosphatase activity is inhibited by NaF but not by okadaic acid. Functionally, protein phosphatase able to dephosphorylate StkP-P and a phosphothreonine residue in a phosphopeptide synthetic substrate. PhpP and its cognate protein kinase StkP appear to constitute a functional signaling couple in vivo, PhpP's primary role probably being to control phosphorylation levels of StkP and of its targets (which include LocZ, DivIVA and KhpB (also called EloR/Jag)). PhpP thus performs an essential control of StkP activity. Overexpression confers an stkP deletion-like phenotype. The sequence is that of Protein phosphatase PhpP (phpP) from Streptococcus pneumoniae.